Consider the following 355-residue polypeptide: MKALVLAGGTGTRLRPITHTSAKQLVPVANKPVLFYGLEAIRAAGIIDVGIVVGDTADEIVAAVGDGSRFGLKVSYIPQSKPLGLAHCVLISRDFLGEDDFIMYLGDNFVVGVVEDSVREFRAARPDAHLMLTRVPEPRSFGVAELSDSGQVLGLEEKPAHPKSDLALVGVYLFSPAIHEAVAAITPSWRGELEITDAVQWLIDAGRDVRSTVISGYWKDTGNVTDMLEVNRLVLETTEPRCDGLVDERSDLIGRVLVEEGAEVRNSRVMGPTVIGAGTRVTNSYVGPFTSLAEDCVVEDSEVEFSIVLRGASISGVRRIEASLIGRHVQVTSAPEVPHANRLVLGDHSRAQISS.

Residues Asp107 and Asp220 each coordinate Mg(2+).

Belongs to the glucose-1-phosphate thymidylyltransferase family. The cofactor is Mg(2+).

The catalysed reaction is dTTP + alpha-D-glucose 1-phosphate + H(+) = dTDP-alpha-D-glucose + diphosphate. The protein operates within antibiotic biosynthesis; streptomycin biosynthesis. Involved in the biosynthesis of the streptose moiety of streptomycin. Catalyzes the formation of dTDP-glucose, from dTTP and glucose 1-phosphate, as well as its pyrophosphorolysis. This chain is Glucose-1-phosphate thymidylyltransferase (strD), found in Streptomyces griseus.